The sequence spans 258 residues: Glucanase inhibitor protein 1 (258 aa).

Residues 1–19 (MRVVPTLAAASLALGAVAG) form the signal peptide. Positions 27 to 254 (ILGGGEVPIG…AIEWITSVTK (228 aa)) constitute a Peptidase S1 domain. A disulfide bridge links C54 with C70. N-linked (GlcNAc...) asparagine glycosylation is found at N87, N102, N107, N157, and N185. Intrachain disulfides connect C177/C189 and C199/C230.

This sequence belongs to the peptidase S1 family. As to quaternary structure, forms an apoplastic complex with host endoglucanases in tomato leaves during P.infestans infection.

It localises to the secreted. In terms of biological role, secreted effector that suppresses host plant glucan elicitor-mediated defense responses. Targets host endoglucanases and inhibits the endoglucanase-mediated release of elicitor-active glucan oligosaccharides from P.infestans cell walls. In Phytophthora infestans (Potato late blight agent), this protein is Glucanase inhibitor protein 1.